A 540-amino-acid polypeptide reads, in one-letter code: Beta-secretase (540 aa).

The N-terminal stretch at 1 to 31 (MHFSLPTSRIVVVVPAAAICIVCVLIETCTA) is a signal peptide. Residues 81-435 (YYIEVDIGTP…DRENKRVGFA (355 aa)) enclose the Peptidase A1 domain. Residues aspartate 99 and aspartate 302 contribute to the active site. 3 disulfide bridges follow: cysteine 222-cysteine 439, cysteine 291-cysteine 469, and cysteine 345-cysteine 397. A helical transmembrane segment spans residues 483-503 (ITAYVLAAICLVCLIPVIVFA). The Cytoplasmic portion of the chain corresponds to 504-540 (LTHQINKRCKGRRGRGVVNHHRLDQEGLAENEPNSDP).

It belongs to the peptidase A1 family.

Its subcellular location is the membrane. This chain is Beta-secretase, found in Strongylocentrotus purpuratus (Purple sea urchin).